The sequence spans 596 residues: A-type ATP synthase subunit A (596 aa).

ATP is bound at residue 241–248 (GPFGSGKT).

The protein belongs to the ATPase alpha/beta chains family. Has multiple subunits with at least A(3), B(3), C, D, E, F, H, I and proteolipid K(x).

It is found in the cell membrane. It carries out the reaction ATP + H2O + 4 H(+)(in) = ADP + phosphate + 5 H(+)(out). In terms of biological role, component of the A-type ATP synthase that produces ATP from ADP in the presence of a proton gradient across the membrane. The A chain is the catalytic subunit. This chain is A-type ATP synthase subunit A, found in Ignicoccus hospitalis (strain KIN4/I / DSM 18386 / JCM 14125).